Consider the following 485-residue polypeptide: MLLLELKKTNQTLETIHFIGIGGVGMSGIAEILHNLGYKVQGSDLVENYNTKRLESYGIKIFLGHAEQNITNVSYVVISSAINPKNPEIKEALERKIPIIRRADMLAELMRLKCSVAVSGSHGKTTTTSLVACLFEAAGLCPTVINGGIINNKSTNAYLGSSNYLIAEADESDATFIHIPSTIAIITNIDPEHLDYYKDFETLIGAFRSFITNLPFYGFAVCCTDHKIVRKLVDDITERKIVTYGIDSEDAHIIAFNINTDIASSTFDVKISLPNVLGTTIIEKITIPTPGRHNILNSLAAIAVGIELDFGIKAIKNGFNNFKGVKRRFTKVAEYNKASIIDDYAHHPEEIKATLATAKNIANKQNGKVIAIFQPHRYSRMQYLFDDFMLCFADADILYITDIYAAGENPIEGITGQSLVDKITKHKHHDKANFLAELDDAVGVIIDNAASGDMIIMMGAGNISSFANELDRRLLSRGFSCHTVV.

Position 120-126 (120-126 (GSHGKTT)) interacts with ATP.

It belongs to the MurCDEF family.

It is found in the cytoplasm. The catalysed reaction is UDP-N-acetyl-alpha-D-muramate + L-alanine + ATP = UDP-N-acetyl-alpha-D-muramoyl-L-alanine + ADP + phosphate + H(+). Its pathway is cell wall biogenesis; peptidoglycan biosynthesis. Functionally, cell wall formation. In Rickettsia massiliae (strain Mtu5), this protein is UDP-N-acetylmuramate--L-alanine ligase.